The chain runs to 91 residues: Small ribosomal subunit protein uS19 (91 aa).

The protein belongs to the universal ribosomal protein uS19 family.

In terms of biological role, protein S19 forms a complex with S13 that binds strongly to the 16S ribosomal RNA. This Methylacidiphilum infernorum (isolate V4) (Methylokorus infernorum (strain V4)) protein is Small ribosomal subunit protein uS19.